Consider the following 149-residue polypeptide: 3-hydroxyacyl-[acyl-carrier-protein] dehydratase FabZ (149 aa).

Residue histidine 48 is part of the active site.

The protein belongs to the thioester dehydratase family. FabZ subfamily.

It is found in the cytoplasm. The enzyme catalyses a (3R)-hydroxyacyl-[ACP] = a (2E)-enoyl-[ACP] + H2O. Involved in unsaturated fatty acids biosynthesis. Catalyzes the dehydration of short chain beta-hydroxyacyl-ACPs and long chain saturated and unsaturated beta-hydroxyacyl-ACPs. The polypeptide is 3-hydroxyacyl-[acyl-carrier-protein] dehydratase FabZ (Thermomicrobium roseum (strain ATCC 27502 / DSM 5159 / P-2)).